Here is a 239-residue protein sequence, read N- to C-terminus: Endoglucanase A (239 aa).

The N-terminal stretch at 1-16 (MKLSMTLSLFAATAMG) is a signal peptide.

This sequence belongs to the glycosyl hydrolase 12 (cellulase H) family.

The catalysed reaction is Endohydrolysis of (1-&gt;4)-beta-D-glucosidic linkages in cellulose, lichenin and cereal beta-D-glucans.. Functionally, has carboxylmethylcellulase activity. The protein is Endoglucanase A (cekA) of Aspergillus kawachii (strain NBRC 4308) (White koji mold).